The primary structure comprises 122 residues: Large ribosomal subunit protein uL14c (122 aa).

This sequence belongs to the universal ribosomal protein uL14 family. As to quaternary structure, part of the 50S ribosomal subunit.

It localises to the plastid. It is found in the chloroplast. Functionally, binds to 23S rRNA. In Platanus occidentalis (Sycamore), this protein is Large ribosomal subunit protein uL14c.